The sequence spans 428 residues: Serine--tRNA ligase (428 aa).

Residue 231–233 (TAE) coordinates L-serine. Residues 262 to 264 (RRE) and Val-278 contribute to the ATP site. Glu-285 lines the L-serine pocket. ATP is bound at residue 349-352 (EVSS). Ser-384 contacts L-serine.

This sequence belongs to the class-II aminoacyl-tRNA synthetase family. Type-1 seryl-tRNA synthetase subfamily. Homodimer. The tRNA molecule binds across the dimer.

It is found in the cytoplasm. It catalyses the reaction tRNA(Ser) + L-serine + ATP = L-seryl-tRNA(Ser) + AMP + diphosphate + H(+). The catalysed reaction is tRNA(Sec) + L-serine + ATP = L-seryl-tRNA(Sec) + AMP + diphosphate + H(+). The protein operates within aminoacyl-tRNA biosynthesis; selenocysteinyl-tRNA(Sec) biosynthesis; L-seryl-tRNA(Sec) from L-serine and tRNA(Sec): step 1/1. Catalyzes the attachment of serine to tRNA(Ser). Is also able to aminoacylate tRNA(Sec) with serine, to form the misacylated tRNA L-seryl-tRNA(Sec), which will be further converted into selenocysteinyl-tRNA(Sec). This chain is Serine--tRNA ligase, found in Chlamydia muridarum (strain MoPn / Nigg).